The sequence spans 416 residues: D-amino acid dehydrogenase (416 aa).

FAD is bound at residue V3–W17.

Belongs to the DadA oxidoreductase family. FAD serves as cofactor.

It catalyses the reaction a D-alpha-amino acid + A + H2O = a 2-oxocarboxylate + AH2 + NH4(+). It participates in amino-acid degradation; D-alanine degradation; NH(3) and pyruvate from D-alanine: step 1/1. Functionally, oxidative deamination of D-amino acids. The chain is D-amino acid dehydrogenase from Rhizorhabdus wittichii (strain DSM 6014 / CCUG 31198 / JCM 15750 / NBRC 105917 / EY 4224 / RW1) (Sphingomonas wittichii).